The primary structure comprises 98 residues: NADH-ubiquinone oxidoreductase chain 4L (98 aa).

Transmembrane regions (helical) follow at residues 2 to 22, 29 to 49, and 61 to 81; these read PSISTNIILAFTAALTGMLVF, SLLCLEGMMLSMFILSTLTIM, and ILLLVFAACEAAIGLALLVMM.

It belongs to the complex I subunit 4L family. As to quaternary structure, core subunit of respiratory chain NADH dehydrogenase (Complex I) which is composed of 45 different subunits.

The protein resides in the mitochondrion inner membrane. The enzyme catalyses a ubiquinone + NADH + 5 H(+)(in) = a ubiquinol + NAD(+) + 4 H(+)(out). Its function is as follows. Core subunit of the mitochondrial membrane respiratory chain NADH dehydrogenase (Complex I) which catalyzes electron transfer from NADH through the respiratory chain, using ubiquinone as an electron acceptor. Part of the enzyme membrane arm which is embedded in the lipid bilayer and involved in proton translocation. This is NADH-ubiquinone oxidoreductase chain 4L (MT-ND4L) from Lepilemur seali (Seal's sportive lemur).